Reading from the N-terminus, the 156-residue chain is Small ribosomal subunit protein uS7 (156 aa).

It belongs to the universal ribosomal protein uS7 family. As to quaternary structure, part of the 30S ribosomal subunit. Contacts proteins S9 and S11.

In terms of biological role, one of the primary rRNA binding proteins, it binds directly to 16S rRNA where it nucleates assembly of the head domain of the 30S subunit. Is located at the subunit interface close to the decoding center, probably blocks exit of the E-site tRNA. This is Small ribosomal subunit protein uS7 from Mycolicibacterium smegmatis (strain ATCC 700084 / mc(2)155) (Mycobacterium smegmatis).